Here is a 375-residue protein sequence, read N- to C-terminus: Cyclic AMP receptor 2 (375 aa).

Residues 1–10 (MTIMSDIIAQ) are Extracellular-facing. The chain crosses the membrane as a helical span at residues 11 to 30 (RTILLIADFSSIIGCSLVLI). At 31–44 (GFWRLKLLRNHITK) the chain is on the cytoplasmic side. The chain crosses the membrane as a helical span at residues 45-65 (IISLFCATSLFKDVISTIITL). The Extracellular portion of the chain corresponds to 66–82 (LYKPDQTESGFPCYLHA). A helical membrane pass occupies residues 83–108 (IVITFGSLACWLWTLMLSFSIYNLIV). The Cytoplasmic portion of the chain corresponds to 109-119 (RREPEPERFEK). The helical transmembrane segment at 120 to 138 (FYFCLCYGLPLISTIVMLS) threads the bilayer. Over 139–161 (THIIQPVGGWCWIGDNYDGYRFG) the chain is Extracellular. A helical transmembrane segment spans residues 162–180 (LFYGPFFFIWGTSAILVGL). The Cytoplasmic segment spans residues 181–204 (TSKYTYSVIRSSVSDNKDKHMTYQ). Phosphoserine is present on S192. A helical membrane pass occupies residues 205–223 (FKLINYIVVFLVCWVFAIV). Topologically, residues 224-234 (NRILNGLNQFP) are extracellular. Residues 235 to 259 (TVPNVLHTYFSVSHGFYASITFIYN) form a helical membrane-spanning segment. Over 260-375 (NPLMWRYFGA…NNINNKNDMI (116 aa)) the chain is Cytoplasmic. 2 positions are modified to phosphoserine: S298 and S303. The interval 338 to 375 (PKENENQNHHHHHHHHHHHNHYNNNNNNNNINNKNDMI) is disordered. The span at 346 to 358 (HHHHHHHHHHHNH) shows a compositional bias: basic residues. Over residues 359–375 (YNNNNNNNNINNKNDMI) the composition is skewed to low complexity.

It belongs to the G-protein coupled receptor 5 family. C-terminal Ser or Thr residues may be phosphorylated.

The protein resides in the membrane. In terms of biological role, receptor for cAMP. Coordinates the aggregation of individual cells into a multicellular organism and regulates the expression of a large number of developmentally regulated genes. The activity of this receptor is mediated by G proteins. Plays a key role during tip formation and late development; involved in cAMP-directed patterning of pre stalk cells as they sort before and during tip formation. The chain is Cyclic AMP receptor 2 (carB) from Dictyostelium discoideum (Social amoeba).